We begin with the raw amino-acid sequence, 435 residues long: Probable exopolygalacturonase B (435 aa).

The N-terminal stretch at 1 to 15 is a signal peptide; the sequence is MKFFTAALFASAVSA. Residues asparagine 59, asparagine 184, and asparagine 224 are each glycosylated (N-linked (GlcNAc...) asparagine). Residue aspartate 254 is the Proton donor of the active site. Cysteine 256 and cysteine 273 are oxidised to a cystine. 2 N-linked (GlcNAc...) asparagine glycosylation sites follow: asparagine 262 and asparagine 274. Residue histidine 277 is part of the active site. Residues asparagine 301, asparagine 328, asparagine 365, and asparagine 368 are each glycosylated (N-linked (GlcNAc...) asparagine). A disulfide bridge links cysteine 391 with cysteine 397.

This sequence belongs to the glycosyl hydrolase 28 family.

Its subcellular location is the secreted. It carries out the reaction [(1-&gt;4)-alpha-D-galacturonosyl](n) + H2O = alpha-D-galacturonate + [(1-&gt;4)-alpha-D-galacturonosyl](n-1). In terms of biological role, specific in hydrolyzing the terminal glycosidic bond of polygalacturonic acid and oligogalacturonates. The sequence is that of Probable exopolygalacturonase B (pgxB) from Aspergillus terreus (strain NIH 2624 / FGSC A1156).